A 430-amino-acid chain; its full sequence is Histone acetyltransferase type B subunit 2 (430 aa).

WD repeat units follow at residues 129 to 169, 180 to 220, 233 to 273, 279 to 319, and 323 to 363; these read PHDG…ALTT, GHTA…FTSS, RHTD…EEEA, AHSK…QRLH, and GHED…EEQT. The segment at 365–369 is interaction with the histone H4 N-terminus; sequence EDAED. The stretch at 380-420 is one WD 6 repeat; that stretch reads GHTNRISEFSWCPNERWVVGSLADDNILQIWSPSRVIWGRD. Ser-425 carries the post-translational modification Phosphoserine.

The protein belongs to the WD repeat RBAP46/RBAP48/MSI1 family. Component of the HAT-B complex composed of at least hat1 and hat2. The HAT-B complex binds to histone H4 tail. Component of the CENP-A recruiting complex composed of at least mis16, mis19, mis19 and mis20.

The protein localises to the cytoplasm. It is found in the nucleus. Its subcellular location is the chromosome. It localises to the centromere. The protein resides in the kinetochore. Functionally, regulatory subunit of the histone acetylase B (HAT-B) complex. The complex acetylates 'Lys-12' of histone H4 which is required for telomeric silencing. Component of the CENP-A recruiting complex that ensures the integrity of mitotic spindles through maintenance of kinetochore factors mis6/CENP-I and cnp1/CENP-A. Maintains the deacetylated state of histones specifically in the central core of the centromeres. The polypeptide is Histone acetyltransferase type B subunit 2 (mis16) (Schizosaccharomyces pombe (strain 972 / ATCC 24843) (Fission yeast)).